A 269-amino-acid chain; its full sequence is Tryptophan synthase alpha chain (269 aa).

Active-site proton acceptor residues include glutamate 49 and aspartate 60.

Belongs to the TrpA family. As to quaternary structure, tetramer of two alpha and two beta chains.

It catalyses the reaction (1S,2R)-1-C-(indol-3-yl)glycerol 3-phosphate + L-serine = D-glyceraldehyde 3-phosphate + L-tryptophan + H2O. The protein operates within amino-acid biosynthesis; L-tryptophan biosynthesis; L-tryptophan from chorismate: step 5/5. Functionally, the alpha subunit is responsible for the aldol cleavage of indoleglycerol phosphate to indole and glyceraldehyde 3-phosphate. The chain is Tryptophan synthase alpha chain from Acidovorax ebreus (strain TPSY) (Diaphorobacter sp. (strain TPSY)).